We begin with the raw amino-acid sequence, 76 residues long: Large ribosomal subunit protein uL29 (76 aa).

This sequence belongs to the universal ribosomal protein uL29 family.

This is Large ribosomal subunit protein uL29 from Gloeothece citriformis (strain PCC 7424) (Cyanothece sp. (strain PCC 7424)).